A 358-amino-acid chain; its full sequence is Pre-mRNA-splicing factor spp2 (358 aa).

Disordered regions lie at residues 1–250 (MTDQ…RAVP) and 298–358 (AWNQ…RGDR). Basic residues predominate over residues 24–40 (KTKKPSRPTHTRRHHAR). Composition is skewed to basic and acidic residues over residues 80–137 (LENR…DASR) and 145–160 (RSRD…KDLQ). Positions 174–185 (NPKSTTTATSSF) are enriched in polar residues. 2 stretches are compositionally biased toward basic and acidic residues: residues 233 to 246 (SSHD…HSDY) and 309 to 358 (GDSR…RGDR).

It belongs to the SPP2 family. Associated with the spliceosome.

The protein localises to the nucleus. In terms of biological role, involved in spliceosome maturation and the first step of pre-mRNA splicing. The chain is Pre-mRNA-splicing factor spp2 (msp-40) from Neurospora crassa (strain ATCC 24698 / 74-OR23-1A / CBS 708.71 / DSM 1257 / FGSC 987).